A 480-amino-acid chain; its full sequence is Adenylosuccinate synthetase, chloroplastic (480 aa).

The N-terminal 54 residues, 1 to 54 (MATARVMVADRARAFGGTTATRARRDDQGRRVTIARGIPSRARVVVARASERAY), are a transit peptide targeting the chloroplast. GTP-binding positions include 69-75 (GDEGKGK) and 97-99 (GHT). D70 acts as the Proton acceptor in catalysis. Residues D70 and G97 each coordinate Mg(2+). IMP contacts are provided by residues 70–73 (DEGK), 95–98 (NAGH), T187, R201, N278, T293, and R357. Catalysis depends on H98, which acts as the Proton donor. 353 to 359 (TTTGRPR) provides a ligand contact to substrate. GTP contacts are provided by residues R359, 385–387 (KLD), and 468–470 (GVG).

It belongs to the adenylosuccinate synthetase family. As to quaternary structure, homodimer. The cofactor is Mg(2+).

It is found in the plastid. The protein resides in the chloroplast. It carries out the reaction IMP + L-aspartate + GTP = N(6)-(1,2-dicarboxyethyl)-AMP + GDP + phosphate + 2 H(+). It functions in the pathway purine metabolism; AMP biosynthesis via de novo pathway; AMP from IMP: step 1/2. Functionally, plays an important role in the de novo pathway and in the salvage pathway of purine nucleotide biosynthesis. Catalyzes the first committed step in the biosynthesis of AMP from IMP. The chain is Adenylosuccinate synthetase, chloroplastic from Ostreococcus tauri.